The sequence spans 638 residues: Growth hormone receptor (638 aa).

An N-terminal signal peptide occupies residues 1–18; sequence MDLWQLLLTVALAGSSDA. Residues 19 to 264 are Extracellular-facing; it reads FSGSEATPAT…SPFTCEEDFR (246 aa). The tract at residues 30-51 is disordered; the sequence is GRASESVQRVHPGLGTNSSGKP. The N-linked (GlcNAc...) asparagine glycan is linked to Asn-46. 2 disulfide bridges follow: Cys-56–Cys-66 and Cys-101–Cys-112. The N-linked (GlcNAc...) asparagine glycan is linked to Asn-115. An intrachain disulfide couples Cys-126 to Cys-140. Residues 151–254 form the Fibronectin type-III domain; that stretch reads PPIGLNWTLL…EVLYVTLPQM (104 aa). Residues Asn-156, Asn-161, and Asn-200 are each glycosylated (N-linked (GlcNAc...) asparagine). The short motif at 240–244 is the WSXWS motif element; that stretch reads YGEFS. The tract at residues 260 to 262 is required for ADAM17-mediated proteolysis; it reads EED. A helical membrane pass occupies residues 265–288; sequence FPWFLIIIFGIFGLTVMLFVFIFS. Over 289-638 the chain is Cytoplasmic; sequence KQQRIKMLIL…STDQLNKILP (350 aa). A required for JAK2 binding region spans residues 294–379; that stretch reads KMLILPPVPV…HQKSLSVLAA (86 aa). Residues 297 to 305 carry the Box 1 motif motif; sequence ILPPVPVPK. A UbE motif motif is present at residues 340 to 349; that stretch reads DSWVEFIELD. At Ser-341 the chain carries Phosphoserine. Tyr-487 is subject to Phosphotyrosine. A disordered region spans residues 573 to 592; sequence TTTAERSGTAEDAPGSEMPV. Position 595 is a phosphotyrosine (Tyr-595).

This sequence belongs to the type I cytokine receptor family. Type 1 subfamily. As to quaternary structure, on growth hormone (GH) binding, forms homodimers and binds JAK2 via a box 1-containing domain. Post-translationally, the soluble form (GHBP) is produced by phorbol ester-promoted proteolytic cleavage at the cell surface (shedding) by ADAM17/TACE. Shedding is inhibited by growth hormone (GH) binding to the receptor probably due to a conformational change in GHR rendering the receptor inaccessible to ADAM17. On GH binding, phosphorylated on tyrosine residues in the cytoplasmic domain by JAK2. In terms of processing, ubiquitinated by the ECS(SOCS2) complex following ligand-binding and phosphorylation by JAK2, leading to its degradation by the proteasome. Regulation by the ECS(SOCS2) complex acts as a negative feedback loop of growth hormone receptor signaling. Ubiquitination is not sufficient for GHR internalization.

It is found in the cell membrane. Its subcellular location is the secreted. Functionally, receptor for pituitary gland growth hormone involved in regulating postnatal body growth. On ligand binding, couples to, and activates the JAK2/STAT5 pathway. The soluble form acts as a reservoir of growth hormone in plasma and may be a modulator/inhibitor of GH signaling. The chain is Growth hormone receptor from Oryctolagus cuniculus (Rabbit).